We begin with the raw amino-acid sequence, 1590 residues long: Defective chorion protein, FC177 isoform (1590 aa).

Positions 1-19 (MRLFSLLPLLALLVVQAAG) are cleaved as a signal peptide. Disordered stretches follow at residues 23-60 (VTSD…PSIN), 184-212 (APAP…PDAP), and 268-294 (PAQP…EDPY). The span at 32 to 41 (AGSTTNSTTD) shows a compositional bias: polar residues. Over residues 268 to 280 (PAQPAAAGTDAQA) the composition is skewed to low complexity. 5 tandem repeats follow at residues 493–518 (QNPM…QQIQ), 519–544 (QNPM…QQIQ), 545–570 (QNPM…QQIQ), 571–596 (QNPM…QQIQ), and 597–622 (QNPM…QQIQ). Positions 493-788 (QNPMMMQQRQ…IQQQQRQMMQ (296 aa)) are 12 X 26 AA approximate tandem repeats, Glu, Met-rich. One copy of the 6; approximate repeat lies at 623–652 (QNPMMMQQRQWSEEQAKIQHDQQMAQQMAQ). One copy of the 7; approximate repeat lies at 653-680 (QGLMMTEQRQRQWSEDQAKIQQAQQMAQ). The stretch at 681–696 (QTPMMMPQMQQRQWTE) is one 8; approximate repeat. The 9; approximate repeat unit spans residues 697–720 (DPQMVQQMQQRQWAEDQTRMQMAQ). A 10; approximate repeat occupies 721–733 (QNPMMQQQRQMAE). Residues 734–758 (NPQMMQQRQWSEEQTKIEQAQQMAQ) form an 11; approximate repeat. The 12; approximate repeat unit spans residues 759–788 (QNQMMMQQMQQRQWSEDQAQIQQQQRQMMQ). Disordered stretches follow at residues 843–875 (GPQM…SKSA), 944–983 (RTIN…EHRV), 1119–1221 (EEDA…TKSI), 1261–1352 (PVTE…DDNN), 1375–1515 (FAQG…QATV), and 1538–1590 (EKKS…QTKA). The span at 957 to 977 (SESQKSNSNPPTTLTPAPQEQ) shows a compositional bias: polar residues. A compositionally biased stretch (acidic residues) spans 1119–1130 (EEDAQQEPMEEE). A compositionally biased stretch (basic and acidic residues) spans 1131–1148 (QLQHDPNTEPQYNHKDFV). A compositionally biased stretch (low complexity) spans 1151 to 1195 (TTSTASPITSTTEAATPTGSDSTSEATVTPEVTTTTSTSTTTTTE). Residues 1205–1221 (QQDSQAEAESSHVTKSI) are compositionally biased toward polar residues. Basic and acidic residues predominate over residues 1272 to 1288 (EPSKQEDKPKVEEKVIA). Acidic residues predominate over residues 1295–1306 (EQEEELEEDEDS). Low complexity-rich tracts occupy residues 1307–1319 (TSIS…PSPS) and 1435–1452 (DSGS…TPSP). Residues 1493-1504 (QRPKKSMSKPKK) show a composition bias toward basic residues. The segment covering 1505–1515 (QSSQVTTQATV) has biased composition (low complexity). Residues 1554–1576 (TKPKSIKPVKVIKRKRLRRRQHK) are compositionally biased toward basic residues. Positions 1577-1590 (SIATTIRSPIQTKA) are enriched in polar residues.

Its subcellular location is the secreted. Required for proper assembly of the eggshell. The protein is Defective chorion protein, FC177 isoform of Drosophila melanogaster (Fruit fly).